We begin with the raw amino-acid sequence, 216 residues long: Endoplasmic reticulum vesicle protein 25 (216 aa).

Residues 1 to 21 (MMVSLKSSLFFMLALLTVVHA) form the signal peptide. Over 22-184 (LNFDIPAKTN…TNESTNERVK (163 aa)) the chain is Lumenal. Residues 34-150 (PFCLREYVGE…LEPVEADIRR (117 aa)) enclose the GOLD domain. Residues 185–205 (NFAYLTFISLFVLVIWQILYL) traverse the membrane as a helical segment. At 206-216 (RSFFQRKHLIP) the chain is on the cytoplasmic side.

The protein belongs to the EMP24/GP25L family.

It is found in the endoplasmic reticulum membrane. The protein resides in the golgi apparatus membrane. In terms of biological role, constituent of COPII-coated endoplasmic reticulum-derived transport vesicles. Required for efficient transport of a subset of secretory proteins to the Golgi. Facilitates retrograde transport from the Golgi to the endoplasmic reticulum. The polypeptide is Endoplasmic reticulum vesicle protein 25 (erv25) (Schizosaccharomyces pombe (strain 972 / ATCC 24843) (Fission yeast)).